The chain runs to 598 residues: Probable translation initiation factor IF-2 (598 aa).

In terms of domain architecture, tr-type G spans 3–225 (LRCPIVSVLG…GLAQKFLEQK (223 aa)). The G1 stretch occupies residues 12 to 19 (GHVDHGKT). 12 to 19 (GHVDHGKT) lines the GTP pocket. The G2 stretch occupies residues 37 to 41 (GITQH). Positions 76 to 79 (DTPG) are G3. GTP contacts are provided by residues 76–80 (DTPGH) and 130–133 (NKLD). Positions 130-133 (NKLD) are G4. The tract at residues 200 to 202 (SAI) is G5.

Belongs to the TRAFAC class translation factor GTPase superfamily. Classic translation factor GTPase family. IF-2 subfamily.

In terms of biological role, function in general translation initiation by promoting the binding of the formylmethionine-tRNA to ribosomes. Seems to function along with eIF-2. The polypeptide is Probable translation initiation factor IF-2 (Methanococcus vannielii (strain ATCC 35089 / DSM 1224 / JCM 13029 / OCM 148 / SB)).